The following is a 105-amino-acid chain: Dynein axonemal light chain 4 (105 aa).

It belongs to the dynein light chain family. In terms of assembly, consists of at least two heavy chains and a number of intermediate and light chains.

It is found in the cytoplasm. The protein resides in the cytoskeleton. It localises to the cilium axoneme. Force generating protein of respiratory cilia. Produces force towards the minus ends of microtubules. Dynein has ATPase activity. This is Dynein axonemal light chain 4 (Dnal4) from Mus musculus (Mouse).